The following is a 178-amino-acid chain: Crossover junction endodeoxyribonuclease RuvC (178 aa).

Residues Asp-7, Glu-67, and Asp-139 contribute to the active site. Mg(2+) is bound by residues Asp-7, Glu-67, and Asp-139.

The protein belongs to the RuvC family. Homodimer which binds Holliday junction (HJ) DNA. The HJ becomes 2-fold symmetrical on binding to RuvC with unstacked arms; it has a different conformation from HJ DNA in complex with RuvA. In the full resolvosome a probable DNA-RuvA(4)-RuvB(12)-RuvC(2) complex forms which resolves the HJ. The cofactor is Mg(2+).

The protein localises to the cytoplasm. The enzyme catalyses Endonucleolytic cleavage at a junction such as a reciprocal single-stranded crossover between two homologous DNA duplexes (Holliday junction).. The RuvA-RuvB-RuvC complex processes Holliday junction (HJ) DNA during genetic recombination and DNA repair. Endonuclease that resolves HJ intermediates. Cleaves cruciform DNA by making single-stranded nicks across the HJ at symmetrical positions within the homologous arms, yielding a 5'-phosphate and a 3'-hydroxyl group; requires a central core of homology in the junction. The consensus cleavage sequence is 5'-(A/T)TT(C/G)-3'. Cleavage occurs on the 3'-side of the TT dinucleotide at the point of strand exchange. HJ branch migration catalyzed by RuvA-RuvB allows RuvC to scan DNA until it finds its consensus sequence, where it cleaves and resolves the cruciform DNA. In Trichlorobacter lovleyi (strain ATCC BAA-1151 / DSM 17278 / SZ) (Geobacter lovleyi), this protein is Crossover junction endodeoxyribonuclease RuvC.